The primary structure comprises 169 residues: Protein HIGH ARSENIC CONTENT 1, mitochondrial (169 aa).

Residues 1–59 (MYTYSLLNLSHCRRQTRKKRKTDHTEGFLMEETKPKTVEDVETVDVYTAKGFLSTGHRY) constitute a mitochondrion transit peptide. The region spanning 60–153 (LDVRTNEEFA…WVDAGFAGDK (94 aa)) is the Rhodanese domain. Catalysis depends on C113, which acts as the Cysteine persulfide intermediate.

In terms of tissue distribution, expressed in root hairs, epidermal cells at the surface of the root and in the pericycle within the stele.

Its subcellular location is the mitochondrion. It catalyses the reaction [glutaredoxin]-dithiol + arsenate + glutathione + H(+) = glutathionyl-S-S-[glutaredoxin] + arsenite + H2O. With respect to regulation, inhibited by trobenzenesulphonic acid (TNBS). In terms of biological role, arsenate reductase critical for arsenic tolerance. Reduces arsenate to arsenite in the root, facilitating efflux of arsenic back into the soil to limit both its accumulation in the root and transport to the shoot. Essential for arsenite efflux from the root, but not necessary for arsenate uptake. The chain is Protein HIGH ARSENIC CONTENT 1, mitochondrial from Arabidopsis thaliana (Mouse-ear cress).